A 606-amino-acid chain; its full sequence is V-type proton ATPase catalytic subunit A (606 aa).

239–246 (GAFGCGKT) is a binding site for ATP.

This sequence belongs to the ATPase alpha/beta chains family. As to quaternary structure, V-ATPase is a heteromultimeric enzyme made up of two complexes: the ATP-hydrolytic V1 complex and the proton translocation V0 complex. The V1 complex consists of three catalytic AB heterodimers that form a heterohexamer, three peripheral stalks each consisting of EG heterodimers, one central rotor including subunits D and F, and the regulatory subunits C and H. The proton translocation complex V0 consists of the proton transport subunit a, a ring of proteolipid subunits c9c'', rotary subunit d, subunits e and f, and the accessory subunits vah-19/Ac45 and vah-20/PRR.

It carries out the reaction ATP + H2O + 4 H(+)(in) = ADP + phosphate + 5 H(+)(out). Functionally, catalytic subunit of the V1 complex of vacuolar(H+)-ATPase (V-ATPase), a multisubunit enzyme composed of a peripheral complex (V1) that hydrolyzes ATP and a membrane integral complex (V0) that translocates protons. V-ATPase is responsible for acidifying and maintaining the pH of intracellular compartments and in some cell types, is targeted to the plasma membrane, where it is responsible for acidifying the extracellular environment. Required along with other vacuolar ATPase components for the removal of protein aggregates which form in immature oocytes in the distal gonad. This removal occurs as the oocytes mature and move to the proximal gonad, is triggered by the introduction of sperm through mating and occurs before fertilization. The introduction of sperm triggers V-ATPase accumulation in proximal oocytes and induces lysosomal acidification which leads to engulfing of protein aggregates by lysosomes and subsequent clearance of the aggregates. Lysosomal acidification also leads to changes in mitochondrial morphology and function. Mitochondria in distal immature oocytes are fragmented, produce high levels of reactive oxygen species (ROS) and have high membrane potential, indicative of metabolic inactivity. In contrast, mitochondria in proximal mature oocytes are tubular with lower ROS levels and membrane potential, indicative of an active metabolic state required for aggregate mobilization before clearance. Involved in receptor-mediated endocytosis. This chain is V-type proton ATPase catalytic subunit A, found in Caenorhabditis briggsae.